A 778-amino-acid polypeptide reads, in one-letter code: Ent-trachylobane synthase KSL2, chloroplastic (778 aa).

The N-terminal 37 residues, 1–37 (MLLTCTNSLKISSQAKEWESKTLTGMSLEQLNKRIRI), are a transit peptide targeting the chloroplast. Residues aspartate 529, aspartate 533, asparagine 672, aspartate 673, and aspartate 680 each coordinate Mg(2+). The DDXXD motif signature appears at 529 to 533 (DDFFD).

The protein belongs to the terpene synthase family. Mg(2+) serves as cofactor.

Its subcellular location is the plastid. It is found in the chloroplast. It catalyses the reaction ent-copalyl diphosphate = ent-trachylobane + diphosphate. The catalysed reaction is ent-copalyl diphosphate = ent-kaur-16-ene + diphosphate. It functions in the pathway secondary metabolite biosynthesis; terpenoid biosynthesis. Functionally, diterpene cyclase involved in the biosynthesis of labdane-related diterpenoids (LRDs) natural products. Catalyzes the cyclization of ent-CDP into ent-trachylobane as a major and ent-kaurene as a minor product. This Ricinus communis (Castor bean) protein is Ent-trachylobane synthase KSL2, chloroplastic.